The primary structure comprises 156 residues: Crossover junction endodeoxyribonuclease RuvC (156 aa).

Catalysis depends on residues D7, E66, and D138. Mg(2+) is bound by residues D7, E66, and D138.

The protein belongs to the RuvC family. In terms of assembly, homodimer which binds Holliday junction (HJ) DNA. The HJ becomes 2-fold symmetrical on binding to RuvC with unstacked arms; it has a different conformation from HJ DNA in complex with RuvA. In the full resolvosome a probable DNA-RuvA(4)-RuvB(12)-RuvC(2) complex forms which resolves the HJ. Requires Mg(2+) as cofactor.

The protein localises to the cytoplasm. It carries out the reaction Endonucleolytic cleavage at a junction such as a reciprocal single-stranded crossover between two homologous DNA duplexes (Holliday junction).. Its function is as follows. The RuvA-RuvB-RuvC complex processes Holliday junction (HJ) DNA during genetic recombination and DNA repair. Endonuclease that resolves HJ intermediates. Cleaves cruciform DNA by making single-stranded nicks across the HJ at symmetrical positions within the homologous arms, yielding a 5'-phosphate and a 3'-hydroxyl group; requires a central core of homology in the junction. The consensus cleavage sequence is 5'-(A/T)TT(C/G)-3'. Cleavage occurs on the 3'-side of the TT dinucleotide at the point of strand exchange. HJ branch migration catalyzed by RuvA-RuvB allows RuvC to scan DNA until it finds its consensus sequence, where it cleaves and resolves the cruciform DNA. This chain is Crossover junction endodeoxyribonuclease RuvC, found in Ehrlichia chaffeensis (strain ATCC CRL-10679 / Arkansas).